A 281-amino-acid polypeptide reads, in one-letter code: Pantothenate synthetase (281 aa).

Position 17-24 (17-24 (MGFLHEGH)) interacts with ATP. The active-site Proton donor is the H24. Q48 is a binding site for (R)-pantoate. Residue Q48 coordinates beta-alanine. 134–137 (GEKD) contributes to the ATP binding site. (R)-pantoate is bound at residue Q140. ATP is bound by residues V163 and 176–179 (LSSR).

Belongs to the pantothenate synthetase family. Homodimer.

The protein resides in the cytoplasm. The enzyme catalyses (R)-pantoate + beta-alanine + ATP = (R)-pantothenate + AMP + diphosphate + H(+). Its pathway is cofactor biosynthesis; (R)-pantothenate biosynthesis; (R)-pantothenate from (R)-pantoate and beta-alanine: step 1/1. In terms of biological role, catalyzes the condensation of pantoate with beta-alanine in an ATP-dependent reaction via a pantoyl-adenylate intermediate. The chain is Pantothenate synthetase from Deinococcus radiodurans (strain ATCC 13939 / DSM 20539 / JCM 16871 / CCUG 27074 / LMG 4051 / NBRC 15346 / NCIMB 9279 / VKM B-1422 / R1).